We begin with the raw amino-acid sequence, 138 residues long: MAKPILRVGSRKNTRSASRKNVRKIPKGVIHVQASFNNTIVTVTDVRGRVISWSSAGTCGFRGTRRGTPFAAQTAAGNAIRAVVDQGMQRAEVRIKGPGLGRDAALRAIRRSGILLSFVRDVTPMPHNGCRPPKKRRV.

Residues 1–22 (MAKPILRVGSRKNTRSASRKNV) are disordered. Over residues 9-22 (GSRKNTRSASRKNV) the composition is skewed to basic residues.

Belongs to the universal ribosomal protein uS11 family. In terms of assembly, part of the 30S ribosomal subunit.

It is found in the plastid. Its subcellular location is the chloroplast. This Draba nemorosa (Woodland whitlowgrass) protein is Small ribosomal subunit protein uS11c.